Reading from the N-terminus, the 228-residue chain is CD9 antigen (228 aa).

Topologically, residues 1-12 (MPVKGGTKCIKY) are cytoplasmic. The S-palmitoyl cysteine moiety is linked to residue C9. The chain crosses the membrane as a helical span at residues 13-33 (LLFGFNFIFWLAGIAVLAIGL). Over 34-55 (WLRFDSQTKSIFEQETNNNNSS) the chain is Extracellular. N-linked (GlcNAc...) asparagine glycans are attached at residues N52 and N53. The helical transmembrane segment at 56–76 (FYTGVYILIGAGALMMLVGFL) threads the bilayer. Over 77–87 (GCCGAVQESQC) the chain is Cytoplasmic. 3 S-palmitoyl cysteine lipidation sites follow: C78, C79, and C87. The chain crosses the membrane as a helical span at residues 88–111 (MLGLFFGFLLVIFAIEIAAAIWGY). At 112–195 (SHKDEVIKEV…KEVFDNKFHI (84 aa)) the chain is on the extracellular side. Cystine bridges form between C152–C181 and C153–C167. A helical membrane pass occupies residues 196 to 221 (IGAVGIGIAVVMIFGMIFSMILCCAI). S-palmitoyl cysteine attachment occurs at residues C218 and C219. At 222 to 228 (RRNREMV) the chain is on the cytoplasmic side.

Belongs to the tetraspanin (TM4SF) family. As to quaternary structure, forms both disulfide-linked homodimers and higher homooligomers as well as heterooligomers with other members of the tetraspanin family. Interacts (via the second extracellular domain) with integrin ITGAV:ITGB3. Interacts with integrin ITGA6:ITGB1; interaction takes place in oocytes and is involved in sperm-egg fusion. Part of integrin-tetraspanin complexes composed of CD81, beta-1 and beta-2 integrins in the membrane of monocyte/macrophages. Interacts with CD63; identified in a complex with CD63 and ITGB3. Associates with CR2/CD21 and with PTGFRN/CD9P1. Part of a complex composed of CD9, CD81, PTGFRN and IGSF8. Interacts directly with IGSF8. Interacts with PDPN; this interaction is homophilic and attenuates platelet aggregation and pulmonary metastasis induced by PDPN. Interacts (on T cell side) with CD81 at immunological synapses between antigen-presenting cells and T cells. Palmitoylated at a low, basal level in unstimulated platelets. The level of palmitoylation increases when platelets are activated by thrombin (in vitro). The protein exists in three forms with molecular masses between 22 and 27 kDa, and is known to carry covalently linked fatty acids. Palmitoylation by ZDHHC2 regulates CD9 expression, association with other tetraspanin family proteins and function in cell adhesion.

It is found in the cell membrane. It localises to the membrane. The protein resides in the secreted. The protein localises to the extracellular exosome. Integral membrane protein associated with integrins, which regulates different processes, such as sperm-egg fusion, platelet activation and aggregation, and cell adhesion. Present at the cell surface of oocytes and plays a key role in sperm-egg fusion, possibly by organizing multiprotein complexes and the morphology of the membrane required for the fusion. In myoblasts, associates with CD81 and PTGFRN and inhibits myotube fusion during muscle regeneration. In macrophages, associates with CD81 and beta-1 and beta-2 integrins, and prevents macrophage fusion into multinucleated giant cells specialized in ingesting complement-opsonized large particles. Also prevents the fusion between mononuclear cell progenitors into osteoclasts in charge of bone resorption. Acts as a receptor for PSG17. Involved in platelet activation and aggregation. Regulates paranodal junction formation. Involved in cell adhesion, cell motility and tumor metastasis. The chain is CD9 antigen from Chlorocebus aethiops (Green monkey).